We begin with the raw amino-acid sequence, 123 residues long: Small ribosomal subunit protein uS8 (123 aa).

This sequence belongs to the universal ribosomal protein uS8 family. In terms of assembly, part of the 30S ribosomal subunit. Contacts proteins S5 and S12.

In terms of biological role, one of the primary rRNA binding proteins, it binds directly to 16S rRNA central domain where it helps coordinate assembly of the platform of the 30S subunit. The polypeptide is Small ribosomal subunit protein uS8 (rpsH) (Carsonella ruddii (strain PV)).